A 340-amino-acid polypeptide reads, in one-letter code: Ferrochelatase (340 aa).

Fe cation is bound by residues H189 and E292.

It belongs to the ferrochelatase family.

The protein localises to the cytoplasm. It carries out the reaction heme b + 2 H(+) = protoporphyrin IX + Fe(2+). It functions in the pathway porphyrin-containing compound metabolism; protoheme biosynthesis; protoheme from protoporphyrin-IX: step 1/1. Its function is as follows. Catalyzes the ferrous insertion into protoporphyrin IX. The chain is Ferrochelatase from Ectopseudomonas mendocina (strain ymp) (Pseudomonas mendocina).